The primary structure comprises 1107 residues: Integrator complex subunit 6 homolog (1107 aa).

Residues 2–195 (LITFVVDTSG…LPMEPAIAPM (194 aa)) enclose the VWFA domain. Disordered regions lie at residues 454–515 (RIIN…SGNL), 542–572 (DNETSENSELSQELSESSTTGSSGGGSSSNI), 629–801 (TLRD…VSSP), 818–861 (QISS…IVNN), and 946–1034 (VVRP…TTPN). Low complexity-rich tracts occupy residues 460 to 513 (QQQQ…SGSG) and 546 to 562 (SENSELSQELSESSTTG). The segment covering 629–639 (TLRDIDDDKKP) has biased composition (basic and acidic residues). Low complexity predominate over residues 693–801 (PSLPTLNSLS…PIPSTTVSSP (109 aa)). The segment covering 846-857 (SPPPPPPPPPLP) has biased composition (pro residues). Low complexity predominate over residues 956 to 975 (PLTIDTLTSSSSSSTIPTTT). Positions 976 to 996 (NGSLSTHDTPNTSPTLSSINY) are enriched in polar residues. Low complexity predominate over residues 997 to 1034 (NNNNNNNNNNNNNNNNNNNNNNNNNNRKNSIITTTTPN). The 63-residue stretch at 1041-1103 (IKFVHKEIRR…SLISKLIGYI (63 aa)) folds into the MIF4G domain.

Belongs to the Integrator subunit 6 family. As to quaternary structure, component of the Integrator complex. The core complex associates with protein phosphatase 2A subunits, to form the Integrator-PP2A (INTAC) complex.

The protein resides in the nucleus. The protein localises to the chromosome. Its function is as follows. Component of the integrator complex, a multiprotein complex that terminates RNA polymerase II (Pol II) transcription in the promoter-proximal region of genes. The integrator complex provides a quality checkpoint during transcription elongation by driving premature transcription termination of transcripts that are unfavorably configured for transcriptional elongation: the complex terminates transcription by (1) catalyzing dephosphorylation of the C-terminal domain (CTD) of Pol II subunit polr2a, (2) degrading the exiting nascent RNA transcript via endonuclease activity and (3) promoting the release of Pol II from bound DNA. The integrator complex is also involved in terminating the synthesis of non-coding Pol II transcripts, such as enhancer RNAs (eRNAs), small nuclear RNAs (snRNAs), telomerase RNAs and long non-coding RNAs (lncRNAs). Within the integrator complex, INTS6 acts as a molecular adapter that promotes assembly of protein phosphatase 2A (PP2A) subunits to the integrator core complex, promoting recruitment of PP2A to transcription pause-release checkpoint. The protein is Integrator complex subunit 6 homolog (ints6) of Dictyostelium discoideum (Social amoeba).